A 439-amino-acid polypeptide reads, in one-letter code: Diaminopimelate decarboxylase (439 aa).

K66 bears the N6-(pyridoxal phosphate)lysine mark. Pyridoxal 5'-phosphate-binding positions include G248 and 290–293 (EPGR). Residues R293, R330, and Y334 each contribute to the substrate site. The active-site Proton donor is the C361. Substrate-binding residues include E362 and Y390. A pyridoxal 5'-phosphate-binding site is contributed by Y390.

The protein belongs to the Orn/Lys/Arg decarboxylase class-II family. LysA subfamily. Homodimer. Pyridoxal 5'-phosphate serves as cofactor.

The catalysed reaction is meso-2,6-diaminopimelate + H(+) = L-lysine + CO2. It functions in the pathway amino-acid biosynthesis; L-lysine biosynthesis via DAP pathway; L-lysine from DL-2,6-diaminopimelate: step 1/1. Its function is as follows. Specifically catalyzes the decarboxylation of meso-diaminopimelate (meso-DAP) to L-lysine. The sequence is that of Diaminopimelate decarboxylase from Bacillus subtilis (strain 168).